Reading from the N-terminus, the 107-residue chain is Ig kappa chain V-VI region J539 (107 aa).

A framework-1 region spans residues 1–23; that stretch reads EIVLTQSPAITAASLGQKVTITC. A disulfide bridge links Cys-23 with Cys-87. Residues 24–33 are complementarity-determining-1; that stretch reads SASSSVSSLH. Residues 34 to 48 form a framework-2 region; the sequence is WYQQKSGTSPKPWIY. Positions 49-55 are complementarity-determining-2; sequence EISKLAS. The segment at 56–87 is framework-3; sequence GVPARFSGSGSGTSYSLTINTMEAEDAAIYYC. The tract at residues 88-96 is complementarity-determining-3; it reads QQWTYPLIT. The interval 97 to 106 is framework-4; that stretch reads FGAGTKLELK.

This is Ig kappa chain V-VI region J539 from Mus musculus (Mouse).